We begin with the raw amino-acid sequence, 371 residues long: tRNA-specific 2-thiouridylase MnmA (371 aa).

Residues 13-20 and Met-39 contribute to the ATP site; that span reads GMSGGVDS. Residues 99–101 are interaction with target base in tRNA; the sequence is NPD. The active-site Nucleophile is Cys-104. A disulfide bridge links Cys-104 with Cys-200. Gly-128 provides a ligand contact to ATP. An interaction with tRNA region spans residues 150 to 152; the sequence is KDQ. Cys-200 functions as the Cysteine persulfide intermediate in the catalytic mechanism. Residues 308–309 are interaction with tRNA; the sequence is RY.

Belongs to the MnmA/TRMU family.

It localises to the cytoplasm. It carries out the reaction S-sulfanyl-L-cysteinyl-[protein] + uridine(34) in tRNA + AH2 + ATP = 2-thiouridine(34) in tRNA + L-cysteinyl-[protein] + A + AMP + diphosphate + H(+). Functionally, catalyzes the 2-thiolation of uridine at the wobble position (U34) of tRNA, leading to the formation of s(2)U34. The polypeptide is tRNA-specific 2-thiouridylase MnmA (Listeria welshimeri serovar 6b (strain ATCC 35897 / DSM 20650 / CCUG 15529 / CIP 8149 / NCTC 11857 / SLCC 5334 / V8)).